Consider the following 294-residue polypeptide: Glycine N-acyltransferase-like protein 2 (294 aa).

Position 19 is an N6-acetyllysine (lysine 19).

It belongs to the glycine N-acyltransferase family. Acetylation at Lys-19 drastically decreases the production of N-oleoyl and N-arachidonoyl glycines. In terms of tissue distribution, expressed at highest levels in salivary gland and trachea. Also detected in thyroid gland, spinal cord, prostate, lung and fetal brain.

It is found in the endoplasmic reticulum. It catalyses the reaction an acyl-CoA + glycine = an N-acylglycine + CoA + H(+). It carries out the reaction (9Z)-hexadecenoyl-CoA + glycine = N-(9Z-hexadecenoyl)-glycine + CoA + H(+). The catalysed reaction is octadecanoyl-CoA + glycine = N-octadecanoylglycine + CoA + H(+). The enzyme catalyses (5Z,8Z,11Z,14Z)-eicosatetraenoyl-CoA + glycine = N-(5Z,8Z,11Z,14Z)-eicosatetraenoyl-glycine + CoA + H(+). It catalyses the reaction (9Z)-octadecenoyl-CoA + glycine = N-(9Z-octadecenoyl)glycine + CoA + H(+). It carries out the reaction octanoyl-CoA + glycine = N-octanoylglycine + CoA + H(+). The catalysed reaction is decanoyl-CoA + glycine = N-decanoylglycine + CoA + H(+). The enzyme catalyses tetradecanoyl-CoA + glycine = N-tetradecanoylglycine + CoA + H(+). It catalyses the reaction dodecanoyl-CoA + glycine = N-dodecanoylglycine + CoA + H(+). It carries out the reaction (9Z,12Z)-octadecadienoyl-CoA + glycine = N-(9Z,12Z-octadecadienoyl)-glycine + CoA + H(+). The catalysed reaction is a fatty acyl-CoA + glycine = an N-(fatty acyl)-glycine + CoA + H(+). Mitochondrial acyltransferase which transfers the acyl group to the N-terminus of glycine. Conjugates numerous substrates, such as arachidonoyl-CoA and saturated medium and long-chain acyl-CoAs ranging from chain-length C8:0-CoA to C18:0-CoA, to form a variety of N-acylglycines. Shows a preference for monounsaturated fatty acid oleoyl-CoA (C18:1-CoA) as an acyl donor. Does not exhibit any activity toward C22:6-CoA and chenodeoxycholoyl-CoA, nor toward serine or alanine. The protein is Glycine N-acyltransferase-like protein 2 of Homo sapiens (Human).